Consider the following 423-residue polypeptide: Gamma-glutamyl phosphate reductase (423 aa).

The protein belongs to the gamma-glutamyl phosphate reductase family.

It localises to the cytoplasm. It catalyses the reaction L-glutamate 5-semialdehyde + phosphate + NADP(+) = L-glutamyl 5-phosphate + NADPH + H(+). Its pathway is amino-acid biosynthesis; L-proline biosynthesis; L-glutamate 5-semialdehyde from L-glutamate: step 2/2. Catalyzes the NADPH-dependent reduction of L-glutamate 5-phosphate into L-glutamate 5-semialdehyde and phosphate. The product spontaneously undergoes cyclization to form 1-pyrroline-5-carboxylate. This is Gamma-glutamyl phosphate reductase from Magnetococcus marinus (strain ATCC BAA-1437 / JCM 17883 / MC-1).